We begin with the raw amino-acid sequence, 154 residues long: Interleukin-2 (154 aa).

An N-terminal signal peptide occupies residues 1–20; the sequence is MYKLQFLSCIALTLALVANS. Threonine 23 carries O-linked (GalNAc...) threonine glycosylation. The cysteines at positions 78 and 126 are disulfide-linked. Asparagine 111 carries an N-linked (GlcNAc...) asparagine glycan.

This sequence belongs to the IL-2 family.

It localises to the secreted. Its function is as follows. Cytokine produced by activated CD4-positive helper T-cells and to a lesser extend activated CD8-positive T-cells and natural killer (NK) cells that plays pivotal roles in the immune response and tolerance. Binds to a receptor complex composed of either the high-affinity trimeric IL-2R (IL2RA/CD25, IL2RB/CD122 and IL2RG/CD132) or the low-affinity dimeric IL-2R (IL2RB and IL2RG). Interaction with the receptor leads to oligomerization and conformation changes in the IL-2R subunits resulting in downstream signaling starting with phosphorylation of JAK1 and JAK3. In turn, JAK1 and JAK3 phosphorylate the receptor to form a docking site leading to the phosphorylation of several substrates including STAT5. This process leads to activation of several pathways including STAT, phosphoinositide-3-kinase/PI3K and mitogen-activated protein kinase/MAPK pathways. Functions as a T-cell growth factor and can increase NK-cell cytolytic activity as well. Promotes strong proliferation of activated B-cells and subsequently immunoglobulin production. Plays a pivotal role in regulating the adaptive immune system by controlling the survival and proliferation of regulatory T-cells, which are required for the maintenance of immune tolerance. Moreover, participates in the differentiation and homeostasis of effector T-cell subsets, including Th1, Th2, Th17 as well as memory CD8-positive T-cells. In Camelus bactrianus (Bactrian camel), this protein is Interleukin-2 (IL2).